The primary structure comprises 105 residues: Large ribosomal subunit protein bL21 (105 aa).

It belongs to the bacterial ribosomal protein bL21 family. In terms of assembly, part of the 50S ribosomal subunit. Contacts protein L20.

Functionally, this protein binds to 23S rRNA in the presence of protein L20. The polypeptide is Large ribosomal subunit protein bL21 (Bacteroides fragilis (strain YCH46)).